An 879-amino-acid polypeptide reads, in one-letter code: Metabotropic glutamate receptor 3 (879 aa).

An N-terminal signal peptide occupies residues 1–22 (MKMLTRLQVLMLALFSKGFLVS). Residues 23–576 (LGDHNFMRRE…EDYIRWEDAW (554 aa)) are Extracellular-facing. Cys57 and Cys99 form a disulfide bridge. Residues Ser151 and 172–174 (AST) each bind L-glutamate. A glycan (N-linked (GlcNAc...) asparagine) is linked at Asn209. Tyr222 contacts L-glutamate. 7 cysteine pairs are disulfide-bonded: Cys240/Cys527, Cys361/Cys373, Cys412/Cys419, Cys509/Cys528, Cys513/Cys531, Cys534/Cys546, and Cys549/Cys562. Asn292 is a glycosylation site (N-linked (GlcNAc...) asparagine). Residue Asp301 participates in L-glutamate binding. Lys389 is a binding site for L-glutamate. Asn414 and Asn439 each carry an N-linked (GlcNAc...) asparagine glycan. Residues 577 to 599 (AIGPVTIACLGFMCTCIVITVFI) form a helical membrane-spanning segment. The Cytoplasmic portion of the chain corresponds to 600 to 613 (KHNNTPLVKASGRE). The helical transmembrane segment at 614–634 (LCYILLFGVSLSYCMTFFFIA) threads the bilayer. The Extracellular segment spans residues 635 to 645 (KPSPVICALRR). The helical transmembrane segment at 646-664 (LGLGTSFAICYSALLTKTN) threads the bilayer. The Cytoplasmic segment spans residues 665 to 688 (CIARIFDGVKNGAQRPKFISPSSQ). The helical transmembrane segment at 689–709 (VFICLGLILVQIVMVSVWLIL) threads the bilayer. Residues 710–734 (ETPGTRRYTLPEKRETVILKCNVKD) are Extracellular-facing. A helical membrane pass occupies residues 735 to 756 (SSMLISLTYDVVLVILCTVYAF). At 757–769 (KTRKCPENFNEAK) the chain is on the cytoplasmic side. Residues 770–792 (FIGFTMYTTCIIWLAFLPIFYVT) form a helical membrane-spanning segment. Over 793-802 (SSDYRVQTTT) the chain is Extracellular. The chain crosses the membrane as a helical span at residues 803-828 (MCISVSLSGFVVLGCLFAPKVHIVLF). The Cytoplasmic portion of the chain corresponds to 829–879 (QPQKNVVTHRLHLNRFSVSGTATTYSQSSASTYVPTVCNGREVLDSTTSSL).

It belongs to the G-protein coupled receptor 3 family. As to quaternary structure, interacts with TAMALIN.

It localises to the cell membrane. G-protein coupled receptor for glutamate. Ligand binding causes a conformation change that triggers signaling via guanine nucleotide-binding proteins (G proteins) and modulates the activity of down-stream effectors. Signaling inhibits adenylate cyclase activity. The polypeptide is Metabotropic glutamate receptor 3 (Grm3) (Mus musculus (Mouse)).